Consider the following 466-residue polypeptide: Ribulose bisphosphate carboxylase (466 aa).

Position 111 (asparagine 111) interacts with substrate. The active-site Proton acceptor is the lysine 166. Substrate is bound at residue lysine 168. Lysine 191, aspartate 193, and glutamate 194 together coordinate Mg(2+). Position 191 is an N6-carboxylysine (lysine 191). The active-site Proton acceptor is histidine 287. Arginine 288, histidine 321, and serine 368 together coordinate substrate.

The protein belongs to the RuBisCO large chain family. Type II subfamily. In terms of assembly, homodimer. Requires Mg(2+) as cofactor.

It catalyses the reaction 2 (2R)-3-phosphoglycerate + 2 H(+) = D-ribulose 1,5-bisphosphate + CO2 + H2O. The catalysed reaction is D-ribulose 1,5-bisphosphate + O2 = 2-phosphoglycolate + (2R)-3-phosphoglycerate + 2 H(+). Functionally, ruBisCO catalyzes two reactions: the carboxylation of D-ribulose 1,5-bisphosphate, the primary event in carbon dioxide fixation, as well as the oxidative fragmentation of the pentose substrate. Both reactions occur simultaneously and in competition at the same active site. The protein is Ribulose bisphosphate carboxylase of Rhodospirillum rubrum (strain ATCC 11170 / ATH 1.1.1 / DSM 467 / LMG 4362 / NCIMB 8255 / S1).